The sequence spans 120 residues: U13-lycotoxin-Ls1e (120 aa).

Positions methionine 1–cysteine 16 are cleaved as a signal peptide. The propeptide occupies phenylalanine 17–arginine 54. Intrachain disulfides connect cysteine 56–cysteine 70, cysteine 63–cysteine 76, cysteine 69–cysteine 87, and cysteine 78–cysteine 85. The Agouti domain occupies cysteine 56–cysteine 95.

The protein belongs to the neurotoxin 05 (agouti) family. Contains 6 disulfide bonds. As to expression, expressed by the venom gland.

The protein resides in the secreted. The polypeptide is U13-lycotoxin-Ls1e (Lycosa singoriensis (Wolf spider)).